The primary structure comprises 651 residues: Zinc metalloproteinase nas-32 (651 aa).

A signal peptide spans 1–21; it reads MRRFFICYIGFLSIFLDFILA. Residues 22–202 constitute a propeptide that is removed on maturation; it reads DKDNNSEEER…EQSSKSRRKK (181 aa). 3 N-linked (GlcNAc...) asparagine glycosylation sites follow: Asn25, Asn72, and Asn251. Residues 203–394 form the Peptidase M12A domain; sequence RQIDNLAQFW…KMLNTHYSCS (192 aa). Disulfide bonds link Cys245–Cys393, Cys264–Cys283, Cys395–Cys412, Cys415–Cys426, Cys434–Cys467, and Cys495–Cys516. His291 is a Zn(2+) binding site. Glu292 is a catalytic residue. Positions 295 and 301 each coordinate Zn(2+). The region spanning 380–433 is the EGF-like domain; that stretch reads TFLDLKMLNTHYSCSCPTILSCGNGGFTNPANCSVCICPYGFGGALCTERTDYG. N-linked (GlcNAc...) asparagine glycosylation occurs at Asn411. The 121-residue stretch at 434-554 folds into the CUB domain; the sequence is CGSTLTATDT…TTYTWSYRYV (121 aa). An N-linked (GlcNAc...) asparagine glycan is attached at Asn453. An N-linked (GlcNAc...) asparagine glycan is attached at Asn557. 3 cysteine pairs are disulfide-bonded: Cys610–Cys647, Cys619–Cys640, and Cys628–Cys644. A ShKT domain is found at 610 to 647; that stretch reads CKDRFPKSQCSTYSTNGMCTQQPPLAAEFSCAETCGFC.

Zn(2+) serves as cofactor. Expressed in pharyngeal, anal depressor, intestinal and vulva muscles, head neurons and head mesodermal cell.

The protein localises to the secreted. Functionally, metalloprotease. The polypeptide is Zinc metalloproteinase nas-32 (nas-32) (Caenorhabditis elegans).